A 174-amino-acid chain; its full sequence is MNPRRKSRLSVVLFILLGISVASALVLYALRQNIDLFYTPTEVVNGKNNESHTKPSIGQRIRIGGMVVEGTVERDPKSLKVRFDLNDIGPSVTVIYEGILPDLFREGQGIVAQGVLIEPTVLNATEVLAKHDENYVPPELEAQMQKIHKPMGISDLKNESDRDRQEKQFKEGNQ.

The Cytoplasmic segment spans residues 1–8; sequence MNPRRKSR. A helical; Signal-anchor for type II membrane protein transmembrane segment spans residues 9 to 29; sequence LSVVLFILLGISVASALVLYA. At 30–174 the chain is on the periplasmic side; the sequence is LRQNIDLFYT…QEKQFKEGNQ (145 aa). 2 residues coordinate heme: H131 and Y135. The disordered stretch occupies residues 149-174; that stretch reads KPMGISDLKNESDRDRQEKQFKEGNQ. A compositionally biased stretch (basic and acidic residues) spans 156–174; that stretch reads LKNESDRDRQEKQFKEGNQ.

It belongs to the CcmE/CycJ family.

Its subcellular location is the cell inner membrane. Heme chaperone required for the biogenesis of c-type cytochromes. Transiently binds heme delivered by CcmC and transfers the heme to apo-cytochromes in a process facilitated by CcmF and CcmH. The polypeptide is Cytochrome c-type biogenesis protein CcmE (Histophilus somni (strain 2336) (Haemophilus somnus)).